The primary structure comprises 431 residues: O-phosphoseryl-tRNA(Sec) selenium transferase (431 aa).

The tract at residues 1 to 36 (MRGLIPDHMLERGRTVLDSYREPVERLLSERRMPEE) is tetramerization. A pyridoxal 5'-phosphate-binding site is contributed by Arg-67. The tract at residues 88 to 98 (GRSGTLVDPQP) is phosphate loop (P-loop). 3 residues coordinate substrate: Arg-89, Ser-90, and Gln-97. The residue at position 269 (Lys-269) is an N6-(pyridoxal phosphate)lysine. Arg-298 lines the substrate pocket.

Belongs to the SepSecS family. As to quaternary structure, homotetramer. The cofactor is pyridoxal 5'-phosphate.

It catalyses the reaction O-phospho-L-seryl-tRNA(Sec) + selenophosphate + H2O = L-selenocysteinyl-tRNA(Sec) + 2 phosphate. It functions in the pathway aminoacyl-tRNA biosynthesis; selenocysteinyl-tRNA(Sec) biosynthesis; selenocysteinyl-tRNA(Sec) from L-seryl-tRNA(Sec) (archaeal/eukaryal route): step 2/2. Converts O-phosphoseryl-tRNA(Sec) to selenocysteinyl-tRNA(Sec) required for selenoprotein biosynthesis. This chain is O-phosphoseryl-tRNA(Sec) selenium transferase (spcS), found in Methanopyrus kandleri (strain AV19 / DSM 6324 / JCM 9639 / NBRC 100938).